We begin with the raw amino-acid sequence, 429 residues long: UDP-N-acetylglucosamine 1-carboxyvinyltransferase (429 aa).

22 to 23 lines the phosphoenolpyruvate pocket; it reads KN. Arginine 102 contributes to the UDP-N-acetyl-alpha-D-glucosamine binding site. Cysteine 126 (proton donor) is an active-site residue. The residue at position 126 (cysteine 126) is a 2-(S-cysteinyl)pyruvic acid O-phosphothioketal. UDP-N-acetyl-alpha-D-glucosamine-binding positions include 171–174, aspartate 316, and isoleucine 338; that span reads KVSV.

The protein belongs to the EPSP synthase family. MurA subfamily.

The protein localises to the cytoplasm. The catalysed reaction is phosphoenolpyruvate + UDP-N-acetyl-alpha-D-glucosamine = UDP-N-acetyl-3-O-(1-carboxyvinyl)-alpha-D-glucosamine + phosphate. It participates in cell wall biogenesis; peptidoglycan biosynthesis. In terms of biological role, cell wall formation. Adds enolpyruvyl to UDP-N-acetylglucosamine. This is UDP-N-acetylglucosamine 1-carboxyvinyltransferase from Azorhizobium caulinodans (strain ATCC 43989 / DSM 5975 / JCM 20966 / LMG 6465 / NBRC 14845 / NCIMB 13405 / ORS 571).